Reading from the N-terminus, the 123-residue chain is Defensin beta 118 (123 aa).

The N-terminal stretch at 1–19 is a signal peptide; it reads MKLLLLALPILVLLPQVIP. Intrachain disulfides connect C27–C54, C34–C48, and C38–C55. Positions 65 to 123 are excised as a propeptide; the sequence is LPTTSPTPLSDSTPGIIDNILTIRFTTDYFEISSKKDMVEESEAGQGTQTSPPNVHHTS. Residues 100–123 are disordered; it reads KDMVEESEAGQGTQTSPPNVHHTS. The segment covering 109–123 has biased composition (polar residues); that stretch reads GQGTQTSPPNVHHTS.

This sequence belongs to the beta-defensin family. In terms of processing, the three-dimensional structure formed by the three intramolecular disulfide bridges is indispensable for antimicrobial activity. As to expression, high-level and epididymis-specific expression. Most abundant in the epithelium of the caput and is also present in the lumen and bound to sperm.

It localises to the secreted. In terms of biological role, host defense peptide that exhibits antimicrobial activity against both Gram-negative bacteria, such as E.coli and S.typhimurium, and Gram-positive bacteria, such as S.aureus and B.subtilis. Inhibits cell adhesion of E.coli on intestinal epithelial enterocytes. Causes rapid permeabilization of both the outer and inner membrane of E.coli, leading to morphological alterations on the bacterial surface. Binds to bacterial lipopolysaccharides (LPS) with high affinity, and may thereby be involved in immunoregulation through LPS neutralization. May contribute to epididymal innate immunity and protect the sperm against attack by microorganisms. The sequence is that of Defensin beta 118 (DEFB118) from Macaca mulatta (Rhesus macaque).